We begin with the raw amino-acid sequence, 254 residues long: Alcohol dehydrogenase (254 aa).

Phenylalanine 10–leucine 33 lines the NAD(+) pocket. Serine 138 is a binding site for substrate. The Proton acceptor role is filled by tyrosine 151.

The protein belongs to the short-chain dehydrogenases/reductases (SDR) family. Homodimer.

It carries out the reaction a primary alcohol + NAD(+) = an aldehyde + NADH + H(+). The catalysed reaction is a secondary alcohol + NAD(+) = a ketone + NADH + H(+). The chain is Alcohol dehydrogenase (Adh) from Drosophila subobscura (Fruit fly).